We begin with the raw amino-acid sequence, 258 residues long: MDLNLQDKVVIVTGGASGIGGAISMRLAEERAIPVVFARHAPDGAFLDALAQRQPRATYLPVELQDDAQCRDAVAQTIATFGRLDGLVNNAGVNDGIGLDAGRDAFVASLERNLIHYYAMAHYCVPHLKATRGAIVNISSKTAVTGQGNTSGYCASKGAQLALTREWAVALREHGVRVNAVIPAEVMTPLYRNWIATFEDPEAKLAEIAAKVPLGRRFTTPDEIADTAVFLLSPRASHTTGEWLFVDGGYTHLDRALV.

NADP(+) is bound by residues serine 17, isoleucine 19, arginine 39, histidine 40, glutamate 63, leucine 64, and asparagine 90. Residues asparagine 94, serine 140, lysine 141, glutamine 147, and tyrosine 153 each coordinate beta-L-fucose. Residues tyrosine 153 and lysine 157 each coordinate NADP(+). Tyrosine 153 functions as the Proton acceptor in the catalytic mechanism. Residues alanine 184 and glutamate 185 each contribute to the beta-L-fucose site. NADP(+) contacts are provided by valine 186 and threonine 188.

Belongs to the short-chain dehydrogenases/reductases (SDR) family. Homotetramer; dimer of dimers.

The enzyme catalyses beta-L-fucose + NADP(+) = L-fucono-1,5-lactone + NADPH + H(+). The catalysed reaction is D-arabinose + NADP(+) = D-arabinono-1,5-lactone + NADPH + H(+). It participates in carbohydrate degradation; L-fucose degradation. Functionally, L-fucose dehydrogenase involved in an L-fucose degradation pathway. Catalyzes the oxidation of L-fucose to L-fucono-1,5-lactone. Can also act on D-arabinose, with lower catalytic efficiency, and has weak activity with L-galactose and 4-deoxy-L-fucose. Shows a preference for NADP(+) over NAD(+). In Burkholderia multivorans (strain ATCC 17616 / 249), this protein is L-fucose dehydrogenase.